The following is a 12345-amino-acid chain: MADSGGPGSKHMDPTTIDAGGGGAGAAGGDDVPPVPAVRRRRAHEQKSSREQVLEEEKSQQLETSTVTRTYMKTITTSLTTSSSSNVEEFILGEHAAGAAAAPSPNQQRLRQKVAQYEKVWSDGSSPVKRPAEQSSDELRLTDDQDEYDAENPFEIDVHEIERRLRQERQRGLAEAEAAKLAFQQVQLRHTTPPRRVEVTSDQVASPFNVTLRTTSRMSPGAEHGNVEEHLAPFNVTLRTTRRTKKKEFKELENFLEGERTVREVPSADGVRTIITSSMTSDGGYAEEKIYRHGEGYVSPRDSPSWSRSSYSSERSSVTPPRSVDLTAGGRRILIKLEQESELTEENQTRDETDLSFGRQEVAMATGNIDITVGGSNPRRRLYQQTTVQVGGGNRTSPQDSTPQRPRDLDLAGTTKTMLTSTPIGTKEQPQTGPKTLVSPAATCQLRGSSTEEPRKIVSHKTITSTTTKSTSSSTSATSSSSTSRKLIETSPVVVGKIAQIRTGKSNASDNDIDIDNDSDTEGRPASSIVIVSTPTRPTTPATASVSASAVTPSASISATAAHALSGIGTFSKSLRQDYQTLATQSGRSNESPSDQEYQEFQSTMASINYARSNSQYDSHIKEKREEQERVQKKTFTNWINSYLLKRVPPLRIDDLINDLRDGTKLIALLEVLSGERLPVEKGRVLRRPHFLSNANTALQFLASKRIKLVNINPADLVDGRPPVVLGLIWTIILYFQIEENSRNLEYLGHGIGGSVSSLDSVGNQKHGDLKAEKWKQGARKTLLNWVTNALPKDSGVEVKDFGASWRDGVAFLALIDAIKANLVNLAELKKTSNRQRLETAFDVAESKLGIAKLLDAEDVDVPKPDEKSIMTYVAQFLHKYPEPKGASRDQSHVQQEADELRRFLVEKTTEYEPMVMMSSFPRDFGEYLLARSEVDAHLAAYNRLKQLIESQSGFLQVSRQSWEEINELWQRLQYQMMYWLWLLDSELPGDFGTVGKWLAEAEKLLMDNDIPNAMNEETAAVISRKLEEHKLFFADLPRILAMFDNAKRSPVAQQIPLEQLRNMERRLQEVGPKAAERRIRLKFLEHKCCLIAFLNLVENKMRGWTGKYGHEEKVAQQLEQYKNFVSRNKIFQEFQKAFVDMQQVVEEYKRDGNVPRKEINDIDRFMYETEERWKRVSMELKCCQNSLEEVVNCWRSWNQLAPTCEEWLQLAEQKVNQSEDERLDFFQDIPVWKDKFDALASSANYLIASCEEPIAQQLRQRHGALSERFERLFANTKQYMHAGDIIRSRQEYKSGIEQLSRWLRGAESVLDQRQVLGNSEQVKEYGQQLQQLASEIDDNEELFKTISRNFQSLIQDLSRDEVDKMMKLLKQEKESLVRIRAQLPAKLHLFHQLQIQQESLEAGQKEIHQWLSEAEQLLGTHNLSGGRDAINEQLHKHKTYFSRTVYYRSMLESKNKVFQNLLKAVSSDDKIDTAPASQQMQQLNERFNYVIQNAQQWEQRLDSAAGGWSNFKDNERVVSEWLTQAESMLVEKHIESKTTIETQKYFFEQVNDRWMNDLVQSAQQLLTTLPAQEQPAVVHSVEQLQSRWKNVLSQAPLHLLKLEFRLDENAFYQSLKDVEKELQLEQQALNRNEDVDSILQRNQQFLLQQDVVPRLERCLQNMQRLAQAHRQQQPGDISLDQAYDNAKSQWQLLSNKLGDMRQTLQQIPAQWQGYHLKFNDMVDWMNGVDQSLKNIVNEVNTMEEFEKEKVVFQKICQDADNKREDMKWLVKTLDSLLSYATEDEANLEQKKLEDLIARYKNLIPTIEITMVKTEVFSKCYTYRREVHEVVCLLSKVKDQTANIPAPDSLDRVNRLIEEQQYAINQLDHQRPHIMSMLQRGRDLIKDVHAPAFVNAEVKNLETGWNQAYTETSDKLQALKGTQAVWSEFVDQKNDIFSMLQTAETELRSLTPLQTDPKNVSQDLKSKRDLNVQLQQASHQLLPKLHALKSELAPLAAPDKRPILEKEVTEVEKMFFNTMEHVKDRVGYLEDYSAKWNNYKTRLAELQEWANKVAPKNIEALQSEDLTPEERVVKVQAFKRILGDRMKQLDLLAADASELAPKEGNIAEAKRLKGEITKLQEVLSAINRNVDHQAQAVQEDLVNWQQFQAGLQQIKPAVEQSEVKVNNVVSKPISLEEAVAMQQNAQQFETQCQEQLDKLHGISNISHKMLCKTNAPDELDAMHSRWTAVHENAKQASAKLEKLVANWKSFDADAAKLEDWVGQGEQQMSRRPAVLNTPHIDKLEKELVKLKSFNNEISQQQAKLVTLGQNADQISLHLAPEGAAALKDRVNQMKGKLQKLSEATRGHINEVSDAIISRQDFNAKLVNFSNWMEQLRNQVTQVEEINPERVETSLHVIHALLQEHADKKPSFNAIYDEVKQLALGATPEESNALNDAYTALVVNYQNLETNMLQKKAALEKWTELLGWKNDTESHLNYLKHQLDKPEGPAAEELSKVIDEIDNLGQGIGYWKGQAKEIDENPAIQLRDALSRRPLIATQIVNDVENKLENLKLRSQSQQQQIQQMTVRKDKFHALEHNFGQALQENRAKLDEILRQHPTLNNIDQIIADLVALNDALKYQADLKNRIHDEGSLLMREDIASMPAIQESLLIMDKNYDSLQNEIADRIQKYNLISQALREYADSKDKFSKELKKAEDLYNAIPQQPRDETELHQASEKTRKTMEQLRKSKLSLDELERRGNNVGKLFSAIGEPIPQEVPQEVTAAKQHWQDLHDKTAKNAHVYETEAVIWSQIEDAKKDLLPWLSETNQGLCDAADNSIEIEFGPMRLSKYRTELPSYQALKDSIVEKTNDLVKINKGAEIPALSALNKLLSEQFAEVNNNADRLSAITTSFNDQEQELRRRSKEAGERVSKLREQLIKCDDMSGDNNKIMERLQQCRALRGELDNSGNEIDNIKQKVDELRNLYPTFSESIIPKELNNVQKRYENVDLYAKKIESSLLQFLKKFHADKVGMLKRIIATQREKVAWCQPESSSDKYNLDVKKSSLQEVSKSIDDCKARHAETLKSLEMLKAVESPQNLAELTSDAELLRKDMQALQDSFDQIKGILDENVDLWSQYEQSNEQISNWLRDVEGRVKAETSSQVNLSEVPQKLQELSILQQDVLAHEPIINNLEQTSQQLIEKNPEARIGQFVTHLVQRYQAVSKALTSYIDKIRGAQLSNANFAKAAKDFNEWFGDAKIEFQELARMGSPGSSSATAQQLQTVKNYIKTFDNGQILLNNAVDIGEALYPVVSPDNRERIRADLRQMREKFDYLRDEANAFMQQVEGVLIQKTSIEESYTQVSHYLNESKAKVPTTDELYPTLATKKAALQNYKTQLQEITLHKNALKQLHDKAVTLCDDESERKTDESIQEYNTLSKKISDRITTVGNHVVKHEAYDQVLEKAQDWLNTIKSEAIDILNETTFEKEGAEEKLLVVENLLQHKPEGDSIFDTCHKLLETVLTQTHPSGHPALLKGFEEPKQSWEDFMTLCQDSLVKLKQLCSKWDEFDTIIEELDNWMKNVEAVVKNQNLKSTAEAKNAHLKQLQDISKDIERRGAAINELMDQGREIEGETDLNLKLSRLNTRYQTLKNLCKESIAKYVNYVKDHESFDKDFDSFKQNLQSSVDELAKTNEIVGDQSVLQDQQNKLREMSDKRILDSTLFEGLIDRGEKLYGHTSPEGREIIRQQLRALRTLWDNYTDDLNSATQKIDQCLLQFNEFSIAQDQLTKWLKDVDKAMQSHTEPKTTLQEKRAQLQNHKLLHQEITTHNVLVDNVCDKAQILVDQIKDNSLNVYLTSIKQLFQSIVQKSDEILHNLDDCVQKHNELNNALSSAKTWISNEKAKLLECDDAYGEKADIKRKIETLGQLAQNKPQAMKIISDIRDLFEKVKATTSEKGNEVLDKEIEELETTMKSHFDDIEGIEGKQKDVLAQWDKFEKALEELTKWCRSAEAVFREQQLQSTLHEKVEQLEKYKIQRELILQKEKEIDAFGDAAHALLNNCGADRLKTLTTQITNRYQLLQVLSKEVVNRWSNLVDDHQFYQDKYNEVDLWLQPIESQMAKVLLDEPTQSSNILQVLLSEKEQAESLFAALNAAGEKALPETSTQGREKIRKDLRDIRDRWDKLDEGIRNLEKRQEAQGVQLSSYQDILNQTVNWLDQVEKLIHNENPASWTSAQEIRSKLYKYKATNQDINSHKRIVEAVNEKAAALLGSAAPANADEISKAVAEVNKRYDQVGQDCAKLVADLDGAFDVYQQFSELQKAQQDYQKNLWDRLTGYSDYSGNKAALQARLQKINEIQDALPEGVAKLKSLEDHIEQQASNIPARSKEVMARDLANLHADFEKFGASLSDVKSGLENRLQQWNDYEINLDRLITWLGEAENSLKNYNLKSSFEEKEEQLNGFQSLAQNLRQNEADFDKVKDDTSELVQSSGETRIAVNVQQVSSRFQSIQATAKEILKKCEQAVQDHGHFNDKYKQCADWLANAQARYDDCCDLSTVASRDDLLKKQVVIQELLAQQPTATQLLNSTVELGEKCYGSTATEGREAIRSQLDDLTFDQLFDNIAITARKIQDKIAKWSGFDEIADSLKSWLDETENALPADIELKTTLDEKRNKLQTYRDILNDINNHQVELGNLQEIAANLPEKTELVDQIIKDISDRFGKLQKRAQNYVERYEGIVSAHQQYSKAVMDAQEFIDATLNTVHYWGDLDLEQISLHTNLDRLKNLKASLADEFPRVDQVRALGEKVIPGTVDVGQVNIKSQIDTTQQEWESLLTTISSTIEAIEARLQHWSEYEQLRDQCLAWIRDTDNNLHAIDLKEDLPKKRAQLDALKALQGDVRAKELEVDNVTEKAQTLLKGPSSNRASGPELVTKYQQIFHKVKELNNRWQQYVTSHEDFDNAISDCSSWINEIKEKLDYCSDMSSMSPKELDKKLATIQDVILLKDEGSARVLKILEQAQHVLANTAPGGHEAINKELTDLQDLWSGIALRIMDVKSNLDDSITQWSGFLDQVQNVRKFNEWLDGQVKELSEHQTTMTEKRAQLDRVKSTEEKVRVEKIDVDALKIQAKEMIASGQQSQAAFQAQKVLDTFDELFAKTQKLLSHRQDQYRDHRLFKEAYDDLVSWIGRAREKFPSLKQSSLSDKLAIENAVQATEALLNKQAQGELLVEHLVHTGEVVLASTSAQGQEIIRNDIRALRDSFEGLFREINQQKENLEVTMVQWRAYKEEYERLMEWLQQIDILVKNHKLNLCPNLPEKEKQVADMKEVMSRLEKGKDDIDKFNASAASLLKSHLDTYVNNQLRHLSSVYQVQVNLAKDVLKKVETNRDQHREYDANMKSAKDWIANAKATIQSAGEGAGSKEALQRRLEQIQDLIRNRELGQNLVHTAINNGEKIIRNTRSDGRDAINTEMKELQTEWDRLVKKMSTAKVQLETNLLQWADYSSSYSQLQQWITDREAKLQQACEQKIVKSKRGQPGLSSGLSERKANLRQTNNIVQDIVSFEPMIQSVTSKASVLQQGAPGTEISDKYENLTKQAKDLYEKQKNTIESYQSLIDAGNEFATWLRNAKERLSKCSEPTGDKQALAEKTHQLKILQGELPEGAQKLKNALEQGEIACRSAEPEDCEIIEQEVALLQEEFDAYREALNKAKDYLEVGIVKWSDYQDQYTEALEWLSKTEALVQSYNKLQDSLIQKKVVLEQFQGHLQTLFDWQKTLDDLNMKAQVLLETCSDTRISNAIMQLTTKYNALLTLAKEVMRRLEMHYQEHQQHHSLYEECQSWIEKTREKLSECEQIPGTLNEVQIKLNTVKNLRQGFETGQNKLRYLLELKEKVIMNTEQNGAAKIQEDTEALKQDFDKLLVDLNDVRQKLANRLAQLEEIFKLYKILIEWLEDVEPSVKTSDEFLNDLSEKRAALEKFRVIQRDINGHNDIVEKINQRLKEDNSLDLKDFQPGLTKFDDLQTQVNKIIESLENQVNSHEKYKQAYNELQDWLRRTRIEVEQCADCHGEKDQVESRLNRLGDIQSSSLEGKALLEACEELSQAVIATSGSEGQDNVAQEIKHLTSEWETLQTISRDARSSLESCLAAWQTFLQKFNKINLWIETMNKRVTKSQEGENKTPEDLVNAKKLLEEVLAEKDNVEDLNDNCELLMEQSACTRIRDQTIETQANYTKLLTSAQGLVAKIEKNLSDHTEFLNYKKEMDAWIEKAQQVLDDCSTDGDAAIIAQKLDTVNSLASRLPEGQHLLALVQDAYSKASNITPEDKQEKLRELMTKVREDWDALGLAVKQKLSDLKQAQNRWNDFAANKDKLEKWLNETETTLKVAPETKGELSEMKTLLERYKTLSNELKLKGNELEQLQSEARDLGTEVDAVNRLQSRCDKLKNDCSAHITALEQEMFDYNAYHQSLQDVEKWLLQISFQLMAHNSLFISNREQTQEQIKQHEALLVEIQKYQTNLDDLNAKGQAQIKRYESSTPAIRPTVESQLKNIQDSYNSLLQTSVQIKNRLLESLAKFQEYEDTLDSIMRNLETYEPIIQTELDAPATSLELAQNQLRCAQEMQNKLNNEKSRLAAAVQACEAATASISRPSSPLETAMQAIPERELIVRAKLEDLLDQKPPPKTRSSTGGVSTDDDKDEADVEIQVELSDVNEALLDPIAHERVKNYRRIVRLNSAHVGKLNELVAKVQSHLGGLTASVSELEQQQKQRAELQDWVKKQQSSVSDWMMRPCKLRPEAAQQELVSMNDLLNSIGDKRSQLMLEMTGSLGDEDTDLDDNIDKLESELMDAIAKKQAGQNVIDGYRQGMADVQNWFDTLIKRMDVLDRGSGLNCAQKMAAINEIKNEYELQGHPKIQELKGKAAQVAEVISNLDGQQVEEQMKSLDRRFADLGKRIDRKSQLLDVTNKGVEGAKGEIDQLQNWVKQQIEELQAPKPLGYTPKDAEARQQKIKSLMKDAEAKQSLADVLEKRVANMQQELEPVEYSQLESALRNLNTENRNLSGVLKAELDRALEASKARKSLENDLDKARQWLKTKISEVRKLPVYHPLTSAEIEKKIQENRKYDDDAKQFNDSVLTDVQRQAANIMKDCDDADKAALQQILDEIAADYQTLKDESSKRGKSLDDLLQGRKAFEDSMKNMGDWLNEMETATEGELRTTSLPVLEEQLAHYKKLLSDAENKGGLINDVSEQGKSILPTLSNADKLKLNDDIKNMKDRYGRIKNTIDDRVNALGDHIKKYKDAKSRLAECSQFLGNIQQKLRELNRPIGSRIEDVQDLLGAYEGILKELKDSKSKMGDMQMDDLPELQSILAQQDDMIKLIEDQLAHLRQLLLLREQFIALINEIIAFIMKYTDVIIDIENSPDSLEDKINKYDDVIVKIQECEGVLASANDKGQKIASEGNAADKNSITEQLQSLKNQLQNLRKAVESQRQKHQLQLESHKKMAAELSEILDWLHSHEGAAKSRPLLDRDPESVERELQKHQSLSQDIESYLNKFNKINDGVKTEIGMPSSLLEMLSEGRSLVASLPHELEEREKYLKNNRDSRLEYMQLVAKFNDWVHEAELRLQNSQHGIDYEHLVQDLDEHKIFFGNEAPIRNLVHKQIQEAADKIWSSLNNYEQSELSAELAQFQTKLTNTLANAKTQQSELEKEAERWREYQQSIDRVKATIERTKFVDEPVQNLAGLHFNIQKLSHAIGNVQSQNSDLTLVNQQAQSLIRQADARNRQLIEQDNAGLNRSWQDLVRSLEQRRDNLQQLAEHWDGFENSLHAWEKALGRLEDKFRNVDPTVRSRRHLEDTKNAIQELREESNQLKSSHKEIEALSKSILTFLGEVHKPSAEAIQAKVDKLVEQQAKLNDTLRDKEQQVSKDLEEIEQVFRRISQLQDKLNALHEQLQSVHVYDEHIAQTEQLLITLNSQVQQAAEESKLLVAQTTAHYQAKQNQLPSDIAQEFTALELLAERVQVTMETKEKDFKRAKTVRTEYVDGVDEVQRWLLQAEVQVQERSLTPTQMKELLQRINHEITAIYERFTLVKTNGQLIIENCRNSEEKTLVQTTIDQLAASLAQVRGWLDEKKQAVGDSLDAWTRFMNLYQIVMSWASEKRNFIDQTIELRTLPEARNKLNDYVTSVKSIKPIVKHLSEMDKELEHIGQVTTVGDLKDKLQEAEDAKISVEAVLLERNSLLQEACEEWDQCERKIKDIRSWHEKTKQGLDSSQQQKKPLRDQLGFCEKTLADINVQKTKLRLSIEKLEVHFRNGMGGDPRLSENVDDLVRVLDGLGELVKAKSQSLEQTLAQIDVYQQQMQSLRQRIIQEEQQLRLVMAPTYLPHDRERALAEQQDLITQELDELLQSLSSVEDGIANMNQSSLDGMLHGLKLIQSNLEVHERDAIELKNQAKKLPTDPATERLLNDTVDRIDLLLRRTQQGITMIANAMHGQKKRQQEIDEYQQHLLELEQWIIEVSAELASFEPTSDSSTDEQVLKSQVERSQQLLRTLKDRQQSMEDLVEQTRQLQSHPDVSPLADTLMEQLQSIITILREQVTVATKRIFTIEKRIVDLRKAKSEEAQRQRVLADSLIKPPTEAPASPEAHESIESNENTIDSSSMPEEEIKPTGVYVETQTSLSLQQPPVQVVTTTTVEAQTSFKEPAVETAEVALQTQKERSPTENIMVTQTVHHGQETIQIDTTRNKDVPDEPEDVQIEARYHQRPKGDVDRATELILKNVPQAFETTFVEPDETTTEVIVGPDGTKHIVLKKVTRTRQQVVQQQQISSIETISDSDGNIEVHSTGQINLENVHTTDTKADPEEGSVHTVITQQTRGAVVDSTQPEGVILQEFETEPTIETYEEVIAPGSQAQLIPMQPGDVQTQGTIRAVVQQVTRKVIRKTRKIIKRVVIIDGKEHITEEVVEEPEEVEITEEETAPHINVNIVRTVDGKVVSEEEFQRMMQEPGVLIEEVATDLQKPTAEPQQEVFDIESTQVTTTTRTTTATTQEQEQPEQQTQPTTTETTKEAPVELPAPQVDVEQPVVVATTSPVHVPTADVVEPKDSSPTSTTAAVVDVEAVVEDINEIWPLEHHLKPTNIDFSQHVEELAAPAAVTAETEASMPVEEIWPTSPETGNSLTLEQYEFEPQSPHEESTKSDLVKPQETEPQVVAETKPEGITTGSITITKTTTTITSSTEVPEETLVQNVPADEQQPPANKIKTDIQSFLEAEQTLAAALKEQSSTPTGASVAEDVQTQPEEIVLEERTVEISTIKTEENQQEPVIVEEVKSLPVEPEPVEPELEEVAIAIVEQTEEKPEEPVIEKQPASGPIDLRAATQLFISGEAAASTAPQKTFQISAPSLEDNGAGVLKVVLGKESTNEEDTAAPTTGKVSMTIIETAAAPAADAKRRRKKKKRRDTKHEEELEQEQETEPEPVAAVKEPEVSSDVPVSPEDSPRDTVRHESIVEISPDSDLSSIEIDTKVKIVEDAVVSSPSESPRTPMVELVIPTEVVELALVEDEEQQTTPRIPSPTEKSEVEQDIKSVQTSPQHQPKLDETAVQTSLEVQPDNQENESQTLIVEITETEAQTTPRSEEQSVAVEISTTEIQTDVSGQPAETVEISSQTTVTTTIEKELQTTPKDSPRAPEAGSSDVVESLVQDLVKDMTTDLPVRTSEQSTVTETTTTTETHVQTTTPEPREQTEVIKPETAHEETSTVELVQFADGEMQTTPPGDQQPASLDDSSLTATSISVSEPYELEVKTTVAIPADSDTSVAEPTVYEYTQTMQLPKQEKKSKKDKKKKQKNVPEVEQQLPEDQQISVTVEIAPELLSESGIVVSTNQQIEDVPHVTPVVDTPIESEEVETPKAQRVQLQITKTTVYDEYPDLPVHITEQNKVLIASQQSKRSGAGPTSSAVTIEEVGSPTEELVVPITPGPDNLSGEPHNIWFSATTSVDKTPIELSQALIMSESLQHYPGQQKLTQEPILISTKEAIGDRIKQLKQASPQQATPLSNVLHLATLSEQIKELPTEQRILEVNEGLKDLDVAIKNGDKTVIQTTVITVIEKVSTWLETIEYRVYLIRQNSNEGPSEEKLDNYNQLNDELSTIKQNVVQLERQLSKAEPEPQLLQCVDSLKEHVDAVEQVTQQNQVQDSNDLDKWHNFEVLLYNVSSVLADLQQSYDLLINQEYPLSAKLAQLDELEQQHEAAQQQLAHLCQNARAFQRDFPGKKMPQDVHNAFETSKNIANNIQAERERVLQLQSLAEEYEQTLKEFTKITVLADKLVESPIVSSSLEQLNNEVQKQRKFFVNLSHCRAMLESLEENIDSETREKHSELHKELYNRATSLLDKASERSSKLVQAASRWTVLEKGMRDELQWLQVAQQRVPDLSAVTSADYDQYTTLYQSLSNDISHHYVKMTQLSGIANKLQLLVQAPNLVEETNEALIVLLKLREEVALYLHRLLVFKEIWVQYEQQTDKLEAFVREAEQELRNIQIPSQPTHQPIEHMRQFWEIKARFELHNNVRTDTGLSFEKSLQVIPLADEMLQRQFHAQLEDRWQAVAQAIELIQHNIVECLSSEDVPADEKLKMVERELQEIYLTMTSMKGVIKNEEELCLYIERVQVLRTRVGFIGNELGRIGLQEPAIEPEKVGELFSLSHKISTQIAEELEGASVLRDQLQAIQEGISNQRKHQAKISVILDECEAAERQGADVLEKAVADCQAAGEELVISWQEIMRIRQMLHTLPMRLKMSVSPVKLERDISQLQDDHAFLESKCTNIMAILRSRLAVWLRYERQLELVHGSVQETDFMMELIRVHGQVDYERLRKATERLEGLAGDLHNREQLIDELKGAAKPLIESCDVQIVEQIESAVQEAVVAWNDTSENLQQLRTRYQRAVELWDKYRNASAAVKNSIDQQMDAVKSLEQPLDALQHAKVCQDNLTTQNDRILELRDIVAKIAADVGLDASALMQGELDALGQRLAECKDAITTLANVAETQDKERKELDKEVTLAKAYFNNVQQDISREAPQNPKESEEQLAALRAHLQTLARTEEQLRQLKERHQNSEVAPSVASSDDDGILEVLALWQKIFQDTFQEYHRLSTRLARSQNSSEALRLWRQYLQHVQSFLSCAIPEDYSSLREQQQLCAIHQNLLISQQSVLSETPLESELSEQYKALTNLHNETLSRIMQRNGELERRVSGWNAYRQQLAALLDWLRQREAERNALQLRYIHLKRVPHLKHRLDAMIQQLDQGEQQSKALQEQQQELARHCDDALATAMRMEQASIGQRISNLRAALKTWQGFLQRVTQLSESYEQRVNQLQQEFGAAQKLLDANSESLPTQPAAIEQLLGSLRAQRVQLGAQVSALESLTVTQEELKECISPHDMKTIRQRNWLLWQQHADLDYQLANLINSIEERLSLLSNYQIRYDRISQWLQRLEQRVEKDADVTAMTNPEQAAKQLEQQVNSELQLRDKEREWLLSTSRELLTLYSEPEVRSQVQQQSDSLIDRWQRLKYLAKQKATKIGELKMTLLRLEERIALIRAWLFEVESQLDKPLNFESYTPNVIEAKLKEHEQIQRSIEHHSSNVGEVLNLVEMLLNDADSWRTQVNTSGLAASAQNLEQRWKNVCSQSAERKARILTIWNLLQQLIKLTAEHKNWLGKQESQIAGFERDQKSHSKHKLEERQMELRAKLEELESQSVNLRQLEQIYAKLAMSAGVEPENIQKLTLPTKVMVSMWRQLTPRCHALLDAIDKDAKLMREFNNAQLEATNSLNAIQKALEQLPSAENQQTSKAEPKAVLQRLESLEKKLQDAQQHVQQADNLAQEAKTRTKQQPQLKQLLELVSAYTTLWQTVQTRIVTLKTTWLTRAAQAAASLPVSEAANAAVQVNTLSQRKLRQAQQMQRETSITAKDAYIMELQTAITECQNNLDELQRTVVDKTRKPGPQKIAKLLGNAQSSTELVKHLSHLLLTECKADDQAAEVDTVAELTLRFDTLQSQWKARQQHDQNASEVGRLTCPLCTQRNWQQIDNDLWRLEQWLQFAESTQKAQSAPPSNIELLEDVTQDHREFLLDLESHKSIISSLNVVGDHLATHTLDTEKARQLRSRLEADNERWNNVCINATKWQGLLQTALMGNSEFHQTIGELVEWLQRTEQNIKASEPVDLTEERSVLETKFKKFKDLRAELERCEPRVVSLQDAADQLLRSVEGSEQQSQHTYERTLSRLTDLRLRLQSLRRLSGIYIVKLGAVLGYEGDNLGVPLHMLSSELLDNTTLSTSSMQAAAPNTENANNTDGGDAVDGDVINTTVLARGARFLGRVARASLPIQALMLLLLGVATLVPHGEDYTCMFSNTFARSLEPMLSYPHGPPPT.

2 disordered regions span residues 1-68 (MADS…STVT) and 121-152 (WSDG…DAEN). Residues 1 to 12295 (MADSGGPGSK…GARFLGRVAR (12295 aa)) lie on the Cytoplasmic side of the membrane. The segment covering 19 to 28 (AGGGGAGAAG) has biased composition (gly residues). Residues 45-60 (EQKSSREQVLEEEKSQ) show a composition bias toward basic and acidic residues. The LRR 1 repeat unit spans residues 249 to 273 (FKELENFLEGERTVREVPSADGVRT). Disordered stretches follow at residues 295 to 325 (EGYV…RSVD), 387 to 488 (TVQV…RKLI), and 504 to 526 (GKSN…GRPA). Residues 299–321 (SPRDSPSWSRSSYSSERSSVTPP) are compositionally biased toward low complexity. 2 stretches are compositionally biased toward polar residues: residues 387 to 404 (TVQV…STPQ) and 414 to 434 (TTKT…QTGP). Positions 462–484 (TITSTTTKSTSSSTSATSSSSTS) are enriched in low complexity. The span at 511–520 (NDIDIDNDSD) shows a compositional bias: acidic residues. Calponin-homology (CH) domains lie at 630-737 (RVQK…LYFQ) and 777-882 (QGAR…HKYP). Residues 823–847 (LVNLAELKKTSNRQRLETAFDVAES) form an LRR 2 repeat. The stretch at 919–952 (SSFPRDFGEYLLARSEVDAHLAAYNRLKQLIESQ) is one TPR 1 repeat. LRR repeat units lie at residues 1089–1112 (CCLI…YGHE), 1389–1411 (HLFH…IHQW), and 1616–1642 (LKDV…ILQR). A TPR 2 repeat occupies 1603–1636 (LEFRLDENAFYQSLKDVEKELQLEQQALNRNEDV). An HAT 1 repeat occupies 1903–1935 (TGWNQAYTETSDKLQALKGTQAVWSEFVDQKND). LRR repeat units follow at residues 2087–2109 (KQLD…IAEA) and 2558–2581 (QQQI…FGQA). The region spanning 2109–2233 (AKRLKGEITK…SRWTAVHENA (125 aa)) is the Calponin-homology (CH) 3 domain. Residues 2663–2696 (ADRIQKYNLISQALREYADSKDKFSKELKKAEDL) form a TPR 3 repeat. The interval 2699–2724 (AIPQQPRDETELHQASEKTRKTMEQL) is disordered. Residues 2704 to 2724 (PRDETELHQASEKTRKTMEQL) are compositionally biased toward basic and acidic residues. LRR repeat units follow at residues 2728–2751 (KLSL…IGEP), 2935–2959 (CRAL…VDEL), and 3030–3053 (SSDK…IDDC). Residues 2894 to 2962 (EQELRRRSKE…KQKVDELRNL (69 aa)) are a coiled coil. Residues 3110–3207 (LWSQYEQSNE…AVSKALTSYI (98 aa)) form a Spectrin 1 repeat. Residues 3346–3379 (KAKVPTTDELYPTLATKKAALQNYKTQLQEITLH) form a TPR 4 repeat. LRR repeat units follow at residues 3370 to 3393 (KTQL…AVTL), 3437 to 3462 (LEKA…TFEK), 3530 to 3556 (LVKL…WMKN), and 3611 to 3634 (NLKL…SIAK). A Spectrin 2 repeat occupies 3539–3633 (KWDEFDTIIE…LKNLCKESIA (95 aa)). The stretch at 3629 to 3662 (KESIAKYVNYVKDHESFDKDFDSFKQNLQSSVDE) is one TPR 5 repeat. One copy of the HAT 2 repeat lies at 3706–3739 (KLYGHTSPEGREIIRQQLRALRTLWDNYTDDLNS). The stretch at 3748-3771 (LLQFNEFSIAQDQLTKWLKDVDKA) is one LRR 15 repeat. One copy of the Spectrin 3 repeat lies at 4177-4273 (SYQDILNQTV…YDQVGQDCAK (97 aa)). A TPR 6 repeat occupies 4360 to 4393 (EVMARDLANLHADFEKFGASLSDVKSGLENRLQQ). The stretch at 4371-4403 (ADFEKFGASLSDVKSGLENRLQQWNDYEINLDR) is one HAT 3 repeat. One copy of the Spectrin 4 repeat lies at 4611-4701 (FDEIADSLKS…GKLQKRAQNY (91 aa)). LRR repeat units lie at residues 4654-4676 (NDIN…LPEK) and 4742-4763 (EQIS…LADE). The stretch at 4799 to 4830 (EWESLLTTISSTIEAIEARLQHWSEYEQLRDQ) is one HAT 4 repeat. One copy of the Spectrin 5 repeat lies at 4820–4919 (HWSEYEQLRD…VKELNNRWQQ (100 aa)). The LRR 18 repeat unit spans residues 4839–4863 (DNNLHAIDLKEDLPKKRAQLDALKA). Residues 4894 to 4926 (ASGPELVTKYQQIFHKVKELNNRWQQYVTSHED) form an HAT 5 repeat. LRR repeat units follow at residues 5266-5289 (QIDI…EKQV) and 5333-5357 (SSVY…RDQH). A TPR 7 repeat occupies 5645–5678 (SAEPEDCEIIEQEVALLQEEFDAYREALNKAKDY). 3 LRR repeats span residues 5761-5784 (SNAI…VMRR), 5820-5843 (PGTL…FETG), and 5979-6002 (TKFD…VNSH). The Spectrin 6 repeat unit spans residues 5791 to 5895 (EHQQHHSLYE…DLNDVRQKLA (105 aa)). The HAT 6 repeat unit spans residues 6088 to 6120 (SEWETLQTISRDARSSLESCLAAWQTFLQKFNK). 2 Spectrin repeats span residues 6321-6405 (RWND…DKLK) and 6424-6530 (AYHQ…RLLE). Coiled-coil stretches lie at residues 6356-6397 (MKTL…VNRL) and 6454-6484 (REQT…LNAK). Residues 6363 to 6387 (YKTLSNELKLKGNELEQLQSEARDL) form an LRR 24 repeat. A TPR 8 repeat occupies 6522–6555 (VQIKNRLLESLAKFQEYEDTLDSIMRNLETYEPI). LRR repeat units follow at residues 6531–6554 (SLAK…TYEP) and 6560–6587 (LDAP…LNNE). Residues 6567–6597 (LELAQNQLRCAQEMQNKLNNEKSRLAAAVQA) adopt a coiled-coil conformation. The tract at residues 6631–6657 (EDLLDQKPPPKTRSSTGGVSTDDDKDE) is disordered. A TPR 9 repeat occupies 6660 to 6695 (VEIQVELSDVNEALLDPIAHERVKNYRRIVRLNSAH). One copy of the LRR 27 repeat lies at 7004–7026 (SALRNLNTENRNLSGVLKAELDR). The stretch at 7161–7195 (EMETATEGELRTTSLPVLEEQLAHYKKLLSDAENK) is one TPR 10 repeat. LRR repeat units follow at residues 7219–7242 (LKLN…IDDR), 7300–7318 (KELK…DDLP), 7319–7339 (ELQS…DQLA), and 7340–7361 (HLRQ…IIAF). A coiled-coil region spans residues 7419–7457 (KNSITEQLQSLKNQLQNLRKAVESQRQKHQLQLESHKKM). An LRR 32 repeat occupies 7524-7547 (SSLLEMLSEGRSLVASLPHELEER). An HAT 7 repeat occupies 7644–7676 (TKLTNTLANAKTQQSELEKEAERWREYQQSIDR). A TPR 11 repeat occupies 7654-7687 (KTQQSELEKEAERWREYQQSIDRVKATIERTKFV). LRR repeat units follow at residues 7692–7714 (QNLA…VQSQ), 7752–7777 (QDLV…GFEN), and 7816–7840 (LREE…ILTF). One copy of the TPR 12 repeat lies at 7759–7792 (EQRRDNLQQLAEHWDGFENSLHAWEKALGRLEDK). Residues 7799 to 7935 (TVRSRRHLED…NSQVQQAAEE (137 aa)) adopt a coiled-coil conformation. One copy of the TPR 13 repeat lies at 7878 to 7911 (SKDLEEIEQVFRRISQLQDKLNALHEQLQSVHVY). 4 LRR repeats span residues 8178–8201 (KISV…EWDQ), 8238–8264 (EKTL…HFRN), 8298–8321 (EQTL…IIQE), and 8354–8377 (DELL…SLDG). The TPR 14 repeat unit spans residues 8431 to 8464 (QQGITMIANAMHGQKKRQQEIDEYQQHLLELEQW). One copy of the LRR 40 repeat lies at 8534–8557 (EQLQSIITILREQVTVATKRIFTI). 6 disordered regions span residues 8583 to 8616 (IKPP…EEEI), 8966 to 9023 (QKPT…LPAP), 9131 to 9158 (EFEP…QVVA), 9361 to 9459 (GKES…PDSD), 9502 to 9735 (LVED…TSIS), and 9769 to 9797 (TMQL…EQQL). Residues 8601–8611 (SNENTIDSSSM) are compositionally biased toward polar residues. Low complexity predominate over residues 8982-9011 (TQVTTTTRTTTATTQEQEQPEQQTQPTTTE). A compositionally biased stretch (basic and acidic residues) spans 9136-9151 (SPHEESTKSDLVKPQE). Residues 9394-9404 (KRRRKKKKRRD) are compositionally biased toward basic residues. The span at 9410–9419 (ELEQEQETEP) shows a compositional bias: acidic residues. The span at 9420–9439 (EPVAAVKEPEVSSDVPVSPE) shows a compositional bias: low complexity. A compositionally biased stretch (basic and acidic residues) spans 9440–9451 (DSPRDTVRHESI). Polar residues-rich tracts occupy residues 9544–9563 (AVQT…SQTL), 9587–9597 (ISTTEIQTDVS), and 9605–9625 (EISS…TTPK). Positions 9658-9680 (TSEQSTVTETTTTTETHVQTTTP) are enriched in low complexity. Positions 9681-9698 (EPREQTEVIKPETAHEET) are enriched in basic and acidic residues. The LRR 41 repeat unit spans residues 9699–9721 (STVELVQFADGEMQTTPPGDQQP). Positions 9711–9735 (MQTTPPGDQQPASLDDSSLTATSIS) are enriched in polar residues. Positions 9777–9788 (KKSKKDKKKKQK) are enriched in basic residues. 4 LRR repeats span residues 9995-10019 (SNVL…ILEV), 10073-10096 (EEKL…VVQL), 10252-10276 (KEFT…SLEQ), and 10353-10376 (RDEL…TSAD). Coiled coils occupy residues 10072–10099 (SEEK…LERQ) and 10172–10257 (LSAK…FTKI). The stretch at 10231–10264 (QAERERVLQLQSLAEEYEQTLKEFTKITVLADKL) is one TPR 15 repeat. One copy of the HAT 8 repeat lies at 10426–10458 (IVLLKLREEVALYLHRLLVFKEIWVQYEQQTDK). LRR repeat units follow at residues 10512 to 10535 (EKSL…QLED), 10570 to 10593 (EREL…EEEL), and 10644 to 10667 (AEEL…ISNQ). One copy of the TPR 16 repeat lies at 10854–10888 (VVAWNDTSENLQQLRTRYQRAVELWDKYRNASAAV). An HAT 9 repeat occupies 10855-10887 (VAWNDTSENLQQLRTRYQRAVELWDKYRNASAA). LRR repeat units follow at residues 10907-10929 (DALQ…ILEL) and 11021-11043 (AHLQ…HQNS). Residues 11016-11046 (LAALRAHLQTLARTEEQLRQLKERHQNSEVA) are a coiled coil. The HAT 10 repeat unit spans residues 11070-11104 (DTFQEYHRLSTRLARSQNSSEALRLWRQYLQHVQS). A TPR 17 repeat occupies 11072 to 11105 (FQEYHRLSTRLARSQNSSEALRLWRQYLQHVQSF). The LRR 51 repeat unit spans residues 11197 to 11222 (EAERNALQLRYIHLKRVPHLKHRLDA). 2 coiled-coil regions span residues 11220–11247 (LDAM…LARH) and 11281–11308 (LQRV…AQKL). LRR repeat units lie at residues 11342–11365 (SALE…DMKT), 11398–11422 (LSNY…VEKD), 11670–11692 (EELE…LAMS), 11697–11720 (PENI…LTPR), and 11744–11766 (EATN…ENQQ). A coiled-coil region spans residues 11655-11685 (KHKLEERQMELRAKLEELESQSVNLRQLEQI). Positions 11776–11806 (LQRLESLEKKLQDAQQHVQQADNLAQEAKTR) form a coiled coil. The HAT 11 repeat unit spans residues 11804 to 11836 (KTRTKQQPQLKQLLELVSAYTTLWQTVQTRIVT). LRR repeat units follow at residues 11959-11981 (DTVA…RQQH) and 12198-12220 (SRLT…YIVK). Residues 12253–12272 (SMQAAAPNTENANNTDGGDA) form a disordered region. The segment covering 12256–12267 (AAAPNTENANNT) has biased composition (low complexity). The region spanning 12287 to 12345 (ARFLGRVARASLPIQALMLLLLGVATLVPHGEDYTCMFSNTFARSLEPMLSYPHGPPPT) is the KASH domain. The helical; Anchor for type IV membrane protein transmembrane segment at 12296–12316 (ASLPIQALMLLLLGVATLVPH) threads the bilayer. The stretch at 12301-12323 (QALMLLLLGVATLVPHGEDYTCM) is one LRR 59 repeat. Residues 12317-12345 (GEDYTCMFSNTFARSLEPMLSYPHGPPPT) are Perinuclear space-facing.

This sequence belongs to the nesprin family. As to quaternary structure, core component of LINC complexes which are composed of inner nuclear membrane SUN domain-containing proteins coupled to outer nuclear membrane KASH domain-containing nesprins. Interacts with klar; this interaction allows the anchoring of the Msp300 nuclear ring structure to the nuclear envelope. Interacts with sls; this interaction mediates the recruitment of Msp300 to the Z-disks.

It localises to the nucleus membrane. Its subcellular location is the cytoplasm. It is found in the myofibril. The protein resides in the sarcomere. The protein localises to the z line. It localises to the cytoskeleton. Its subcellular location is the microtubule organizing center. It is found in the perinuclear region. Its function is as follows. Component of the LINC (LInker of Nucleoskeleton and Cytoskeleton) complex involved in the connection between the nuclear lamina and the cytoskeleton. Collaborates with Klar to promote even spacing of the myonuclei at the periphery of striated muscle fibers by mediating a tight association between a nuclear ring structure of Msp300 and the plus ends of a unique astral MT network. In addition, is essential for anchoring nuclei, mitochondria and endoplasmic reticulum (ER) structures to the Z-disks. In fat body cells, part of perinuclear non-centrosomal microtubule-organizing centers (ncMTOCs) which function to accommodate the organization of microtubule (MT) networks to control nuclear positioning and dynein motor-based retrograde endosomal trafficking. Functions as the primary organizer of the ncMTOC by recruiting Patronin, shot and msps to the organizing centre. Within the ncMTOC, Msp300 and shot anchors the ncMTOC at the nuclear surface and recruits the MT minus-end regulators Patronin and Nin for assembly, anchoring and/or stabilization of circumferential and radial MTs at the ncMTOCs. Patronin, and perhaps Nin, recruits msps to the ncMTOC for the gamma-tubulin-independent elongation of radial MTs. This is Muscle-specific protein 300 kDa from Drosophila melanogaster (Fruit fly).